We begin with the raw amino-acid sequence, 267 residues long: Transcription factor Spi-B (267 aa).

Residues 1–31 (MLALEAAQLDGPHLSCLYPEGVFYDLDSCKP) form a TAD1 (Acidic) region. Residues 41 to 62 (LDSTWGWTEAPPAPAIAPYEAF) form a TAD2 region. The ETS DNA-binding region spans 174–257 (LRLYQFLLGL…VKRKLTYQFD (84 aa)).

Belongs to the ETS family. Can form homotypic interactions. Interacts with IRF4/Pip. Interacts with JUN. Interacts with TBP. May also interact with CREBBP and EP300. Interacts with NONO/p54(nrb). Expressed in the medulla of the thymus, the spleen and germinal centers of the lymph nodes. Expressed in B-cells and T-cells, expression increases during B-cell maturation and decreases during T-cell maturation.

The protein resides in the nucleus. Its function is as follows. Sequence specific transcriptional activator which binds to the PU-box, a purine-rich DNA sequence (5'-GAGGAA-3') that can act as a lymphoid-specific enhancer. Promotes development of plasmacytoid dendritic cells (pDCs), also known as type 2 DC precursors (pre-DC2) or natural interferon (IFN)-producing cells. These cells have the capacity to produce large amounts of interferon and block viral replication. Required for B-cell receptor (BCR) signaling, which is necessary for normal B-cell development and antigenic stimulation. In Mus musculus (Mouse), this protein is Transcription factor Spi-B (Spib).